We begin with the raw amino-acid sequence, 237 residues long: Ribosomally synthesized cyclic peptide ustiloxin B precursosr (237 aa).

An N-terminal signal peptide occupies residues 1–19; that stretch reads MKLILTLLVSGLCALAAPA. 2 consecutive propeptides follow at residues 20-22 and 234-237; these read AKR and HGGH.

Post-translationally, ustA is processed by the subtilisin-like endoprotease kex2 that is outside the ustiloxin B gene cluster, at the C-terminal side of Arg-Lys, after transfer to Golgi apparatus through the endoplasmic reticulum (ER). Cleavage by kex2 generates 16 peptides YAIG-I to YAIG-XVI. To process the precursor peptide further, at least two peptidases are necessary to cleave the N-terminal and C-terminal sides of the Tyr-Ala-Ile-Gly core peptide which serves as backbone for the synthesis of ustiloxin B, through cyclization and modification of the tyrosine. One of the two peptidases must be the serine peptidase ustP; and the other pepdidase is probably ustH. Macrocyclization of the core peptide derived from ustA requires the tyrosinase ustQ, as well as the homologous oxidases ustYa and ustYb, and leads to the production of the first cyclization product N-desmethylustiloxin F. For the formation of N-desmethylustiloxin F, three oxidation steps are required, hydroxylation at the benzylic position, hydroxylation at either the aromatic ring of Tyr or beta-position of Ile, and oxidative cyclization. UstQ may catalyze the oxidation of a phenol moiety, whereas the ustYa and ustYb are most likely responsible for the remaining two-step oxidations. N-desmethylustiloxin F is then methylated by ustM to yield ustiloxin F which in turn substrate of the cytochrome P450 monooxygenase ustC which catalyzes the formation of S-deoxyustiloxin H. The flavoprotein monooxygenases ustF1 and ustF2 then participate in the modification of the side chain of S-deoxyustiloxin H, leading to the synthesis of an oxime intermediate, via ustiloxin H. Finally, carboxylative dehydration performed by the cysteine desulfurase-like protein ustD yields ustiloxin B.

It participates in mycotoxin biosynthesis. Functionally, ribosomally synthesized cyclic peptide ustiloxin B precursor: Part of the gene cluster that mediates the biosynthesis of the secondary metabolite ustiloxin B, an antimitotic tetrapeptide. The ustA translated product contains a 16-fold repeated peptide embedding the tetrapeptide Tyr-Ala-Ile-Gly, that is converted into the cyclic moiety of ustiloxin B. This Aspergillus flavus (strain ATCC 200026 / FGSC A1120 / IAM 13836 / NRRL 3357 / JCM 12722 / SRRC 167) protein is Ribosomally synthesized cyclic peptide ustiloxin B precursosr.